A 352-amino-acid chain; its full sequence is Adenosine deaminase (352 aa).

Positions 24 and 26 each coordinate Zn(2+). Substrate is bound by residues His-26, Asp-28, and Gly-181. His-208 provides a ligand contact to Zn(2+). The active-site Proton donor is the Glu-211. Asp-290 is a binding site for Zn(2+).

The protein belongs to the metallo-dependent hydrolases superfamily. Adenosine and AMP deaminases family. Adenosine deaminase subfamily. It depends on Zn(2+) as a cofactor.

The catalysed reaction is adenosine + H2O + H(+) = inosine + NH4(+). It catalyses the reaction 2'-deoxyadenosine + H2O + H(+) = 2'-deoxyinosine + NH4(+). In terms of biological role, catalyzes the hydrolytic deamination of adenosine and 2-deoxyadenosine. This is Adenosine deaminase from Lactococcus lactis subsp. lactis (strain IL1403) (Streptococcus lactis).